Here is a 518-residue protein sequence, read N- to C-terminus: MESFLPLVDENLRSALWFRPEMALTFGTLVLFVLDLVFRRSQARVALLTAGALAVLAAAAGLLAIQPPDAQALFNGMLANDAFAIFFKWLFLAAGALTVIIAAQGRDFPPERIGQFFALLMAIVLGMFMMASATDLLMVYLSLELVSMVSYVLAGFRKGDRKATEGSLKYVIYGGVASGVMLFGMSYLYGLTGTTSLHELGAQLQALQAGSAVSVAATRVALVVAIVFVTAGIGYKVAAVPWHMWCPDVYEGAPTPFTAFLSVGPKAAGFALAIRIFHSALAGPSSPVTGFAESLAGIPWPAVVGVIAAVTMTLGNLTALGQTNLKRLLAYSSIAHAGYTLMGLSAVSDRGMQSVMIYMLVYLVMNVGAFLVVILVAESTGSESILDYRGLSKRHPSAAVAFAIFLFSLTGLPPFAGFVGKWYLFYAVFERIDGPGGAWYAWLALIGALNTAIALYYYVRVIRAMFIDAPYVAEAPPVRLRVGYQVMLGAFSVAILVFGIWWTPMVRWTEASLQLFRG.

The next 14 membrane-spanning stretches (helical) occupy residues F18–F38, V45–I65, A82–A102, I113–A133, L136–F156, V171–L191, V220–V240, P254–I274, L295–G315, L328–S348, V355–L375, A399–V419, W439–V459, and V486–V506.

It belongs to the complex I subunit 2 family. As to quaternary structure, NDH-1 is composed of 14 different subunits. Subunits NuoA, H, J, K, L, M, N constitute the membrane sector of the complex.

It is found in the cell inner membrane. The enzyme catalyses a quinone + NADH + 5 H(+)(in) = a quinol + NAD(+) + 4 H(+)(out). NDH-1 shuttles electrons from NADH, via FMN and iron-sulfur (Fe-S) centers, to quinones in the respiratory chain. The immediate electron acceptor for the enzyme in this species is believed to be ubiquinone. Couples the redox reaction to proton translocation (for every two electrons transferred, four hydrogen ions are translocated across the cytoplasmic membrane), and thus conserves the redox energy in a proton gradient. The protein is NADH-quinone oxidoreductase subunit N of Anaeromyxobacter sp. (strain Fw109-5).